We begin with the raw amino-acid sequence, 180 residues long: Shikimate kinase (180 aa).

14–19 (GAGKST) is an ATP binding site. Ser-18 contributes to the Mg(2+) binding site. Residues Asp-36, Arg-60, and Gly-82 each coordinate substrate. Arg-120 contributes to the ATP binding site. Position 140 (Arg-140) interacts with substrate. ATP is bound at residue Gln-157.

This sequence belongs to the shikimate kinase family. In terms of assembly, monomer. Requires Mg(2+) as cofactor.

The protein resides in the cytoplasm. It catalyses the reaction shikimate + ATP = 3-phosphoshikimate + ADP + H(+). Its pathway is metabolic intermediate biosynthesis; chorismate biosynthesis; chorismate from D-erythrose 4-phosphate and phosphoenolpyruvate: step 5/7. Catalyzes the specific phosphorylation of the 3-hydroxyl group of shikimic acid using ATP as a cosubstrate. The protein is Shikimate kinase of Haemophilus influenzae (strain PittGG).